A 331-amino-acid chain; its full sequence is Very-long-chain 3-oxoacyl-CoA reductase (331 aa).

The helical transmembrane segment at 15-35 (VQWALAGVGALYISAKVLSYL) threads the bilayer. NADP(+)-binding residues include valine 60, aspartate 115, aspartate 123, asparagine 142, tyrosine 209, lysine 213, isoleucine 242, and serine 244. The active-site Proton donor is tyrosine 209. Lysine 213 serves as the catalytic Lowers pKa of active site Tyr.

The protein belongs to the short-chain dehydrogenases/reductases (SDR) family.

It localises to the endoplasmic reticulum membrane. The catalysed reaction is a very-long-chain (3R)-3-hydroxyacyl-CoA + NADP(+) = a very-long-chain 3-oxoacyl-CoA + NADPH + H(+). It functions in the pathway lipid metabolism; fatty acid biosynthesis. Component of the microsomal membrane bound fatty acid elongation system, which produces the 26-carbon very long-chain fatty acids (VLCFA) from palmitate. Catalyzes the reduction of the 3-ketoacyl-CoA intermediate that is formed in each cycle of fatty acid elongation. VLCFAs serve as precursors for ceramide and sphingolipids. This is Very-long-chain 3-oxoacyl-CoA reductase from Pyricularia oryzae (strain 70-15 / ATCC MYA-4617 / FGSC 8958) (Rice blast fungus).